The primary structure comprises 617 residues: Solute carrier family 2, facilitated glucose transporter member 12 (617 aa).

Residues Met1–His29 are disordered. The Cytoplasmic segment spans residues Met1–Ser44. A compositionally biased stretch (polar residues) spans Glu8–Gly17. A helical transmembrane segment spans residues Val45–Leu65. Topologically, residues Leu66–Glu80 are extracellular. Residues Met81–Ile101 traverse the membrane as a helical segment. At Asp102–Cys115 the chain is on the cytoplasmic side. The chain crosses the membrane as a helical span at residues Leu116–Gly136. A topological domain (extracellular) is located at residue Arg137. A helical membrane pass occupies residues Ile138–Ile158. Residues Ala159–Glu172 lie on the Cytoplasmic side of the membrane. The helical transmembrane segment at Leu173–Phe193 threads the bilayer. Residues His194 to Lys197 are Extracellular-facing. Residues Tyr198 to Pro218 traverse the membrane as a helical segment. At Pro219 to Arg278 the chain is on the cytoplasmic side. Residues Ile279–Phe299 form a helical membrane-spanning segment. At Tyr300 to Ser317 the chain is on the extracellular side. The helical transmembrane segment at Leu318 to Val338 threads the bilayer. At Asp339 to Thr345 the chain is on the cytoplasmic side. A helical membrane pass occupies residues Phe346 to Leu366. At Asn367–Ala466 the chain is on the extracellular side. N-linked (GlcNAc...) asparagine glycosylation is found at Asn371, Asn383, Asn396, and Asn401. A helical transmembrane segment spans residues Ser467–Leu487. Over Ser488–Arg498 the chain is Cytoplasmic. The chain crosses the membrane as a helical span at residues Ala499 to Leu519. The Extracellular portion of the chain corresponds to Thr520–Pro528. Residues Trp529 to Ile549 form a helical membrane-spanning segment. Residues Pro550 to Thr617 lie on the Cytoplasmic side of the membrane.

Belongs to the major facilitator superfamily. Sugar transporter (TC 2.A.1.1) family. Glucose transporter subfamily. As to expression, predominantly expressed in skeletal muscle, heart and prostate, with lower levels in brain, placenta and kidney.

The protein localises to the cell membrane. It is found in the endomembrane system. Its subcellular location is the cytoplasm. The protein resides in the perinuclear region. It carries out the reaction D-glucose(out) = D-glucose(in). In terms of biological role, insulin-independent facilitative glucose transporter. The chain is Solute carrier family 2, facilitated glucose transporter member 12 from Homo sapiens (Human).